Consider the following 571-residue polypeptide: Putative F-box protein At5g39460 (571 aa).

The 47-residue stretch at 9-55 folds into the F-box domain; that stretch reads ACLLLTLPEDVFAVISRFLSPSDICNLILCGKSLCALVDSEKTWLVQ.

In Arabidopsis thaliana (Mouse-ear cress), this protein is Putative F-box protein At5g39460.